Reading from the N-terminus, the 513-residue chain is Serine/threonine-protein kinase PBL27 (513 aa).

Residues 1–61 (MSGCLPCFGS…KKELTAPKEG (61 aa)) are disordered. Residues cysteine 4 and cysteine 7 are each lipidated (S-palmitoyl cysteine). Basic and acidic residues-rich tracts occupy residues 15–27 (AASK…ELSA) and 38–57 (ISLD…ELTA). A Protein kinase domain is found at 83 to 360 (FRPECLLGEG…GDVVTALTYL (278 aa)). ATP is bound by residues 89–97 (LGEGGFGRV) and lysine 112. Residue aspartate 210 is the Proton acceptor of the active site. Serine 244 bears the Phosphoserine; by CERK1 mark. Residues threonine 245 and threonine 250 each carry the phosphothreonine; by CERK1 modification. Over residues 365–378 (FDPNAPSGQNSRSG) the composition is skewed to polar residues. Positions 365–513 (FDPNAPSGQN…GPGSFDSTND (149 aa)) are disordered. 2 positions are modified to phosphoserine: serine 392 and serine 401. Residues 417–428 (NSPDYRRRDMVR) show a composition bias toward basic and acidic residues. Residues 434–446 (SEGGSETGGGSGR) are compositionally biased toward gly residues. The span at 456-473 (QESQRGSPASVGRSSRGT) shows a compositional bias: polar residues. Residues 475-486 (RNRDLDRERAVA) are compositionally biased toward basic and acidic residues. Residues 504–513 (GPGSFDSTND) show a composition bias toward polar residues.

The protein belongs to the protein kinase superfamily. Ser/Thr protein kinase family. In terms of assembly, interacts with CERK1 (preferentially unphosphorylated) at the plasma membrane. Binds to MAPKKK5 at the plasma membrane; disassociation is induced by chitin perception by the CERK1 complex. Also associates with MAPKKK3. In terms of processing, phosphorylated by CERK1 upon elicitation by chitin. Palmitoylation at Cys-4 and Cys-7 are required for plasma membrane location.

It is found in the cell membrane. The catalysed reaction is L-seryl-[protein] + ATP = O-phospho-L-seryl-[protein] + ADP + H(+). It carries out the reaction L-threonyl-[protein] + ATP = O-phospho-L-threonyl-[protein] + ADP + H(+). In terms of biological role, receptor-like cytoplasmic kinase involved in the transduction of signal between the host cell surface chitin receptor complex CERK1-LYK5 and the intracellular MAPKKK5-dependent mitogen-activated protein kinase (MAPK) cascade that leads to chitin-induced immunity. Phosphorylates and activates MAPKKK5 when phosphorylated by CERK1 after elicitation by chitin. The sequence is that of Serine/threonine-protein kinase PBL27 from Arabidopsis thaliana (Mouse-ear cress).